A 651-amino-acid polypeptide reads, in one-letter code: Probable potassium transport system protein Kup (651 aa).

Residues 1–16 show a composition bias toward basic and acidic residues; sequence MRDSPGSKSSSERWHD. Positions 1 to 31 are disordered; it reads MRDSPGSKSSSERWHDTMAVSDPTAEGKDES. Helical transmembrane passes span 38-58, 74-94, 129-149, 168-188, 197-217, 232-252, 276-296, 309-329, 366-386, 396-416, 423-443, and 448-468; these read FWALTLGSVGVVFGDIGTSPL, VTPAIVLGVLSLILWSLFIVV, LLLLALGVVGASMFIGDSMIT, LQDYVVPLTLVILVMLFAVQS, AFAPVMALWFLTIAVLGVLHI, AIHFLLNHGLLGLVIMGLVFL, WFCLVLPSLLLNYFGQGALIL, LAPAPLILPLVILATAATVIA, IYLPRVNLLLLIGVLLLVLLF, YGIAVSTTMVADGIMGFVVVW, PAAAAALVVPLVVVDMMFFSA, and LFDGAWVPLLFGIAMVVLIWT.

It belongs to the HAK/KUP transporter (TC 2.A.72) family.

The protein localises to the cell inner membrane. The catalysed reaction is K(+)(in) + H(+)(in) = K(+)(out) + H(+)(out). Its function is as follows. Transport of potassium into the cell. Likely operates as a K(+):H(+) symporter. In Nitrobacter winogradskyi (strain ATCC 25391 / DSM 10237 / CIP 104748 / NCIMB 11846 / Nb-255), this protein is Probable potassium transport system protein Kup.